Reading from the N-terminus, the 464-residue chain is Asparagine--tRNA ligase (464 aa).

Belongs to the class-II aminoacyl-tRNA synthetase family. Homodimer.

It is found in the cytoplasm. The catalysed reaction is tRNA(Asn) + L-asparagine + ATP = L-asparaginyl-tRNA(Asn) + AMP + diphosphate + H(+). In Xanthomonas euvesicatoria pv. vesicatoria (strain 85-10) (Xanthomonas campestris pv. vesicatoria), this protein is Asparagine--tRNA ligase.